We begin with the raw amino-acid sequence, 218 residues long: Octanoyltransferase (218 aa).

One can recognise a BPL/LPL catalytic domain in the interval 27–210; that stretch reads AGAEETLYLL…QFRAIFADST (184 aa). Substrate is bound by residues 72–79, 139–141, and 152–154; these read RGGNITCH, SIG, and GFA. The active-site Acyl-thioester intermediate is the cysteine 170.

It belongs to the LipB family.

The protein localises to the cytoplasm. The enzyme catalyses octanoyl-[ACP] + L-lysyl-[protein] = N(6)-octanoyl-L-lysyl-[protein] + holo-[ACP] + H(+). The protein operates within protein modification; protein lipoylation via endogenous pathway; protein N(6)-(lipoyl)lysine from octanoyl-[acyl-carrier-protein]: step 1/2. Its function is as follows. Catalyzes the transfer of endogenously produced octanoic acid from octanoyl-acyl-carrier-protein onto the lipoyl domains of lipoate-dependent enzymes. Lipoyl-ACP can also act as a substrate although octanoyl-ACP is likely to be the physiological substrate. In Nitratidesulfovibrio vulgaris (strain DSM 19637 / Miyazaki F) (Desulfovibrio vulgaris), this protein is Octanoyltransferase.